We begin with the raw amino-acid sequence, 50 residues long: Acidic phospholipase A2 1 (50 aa).

3 residues coordinate Ca(2+): tyrosine 27, glycine 29, and glycine 31. Residues cysteine 28 and cysteine 44 are joined by a disulfide bond. Histidine 47 is a catalytic residue. Aspartate 48 lines the Ca(2+) pocket.

It belongs to the phospholipase A2 family. Group II subfamily. D49 sub-subfamily. Monomer. Requires Ca(2+) as cofactor. In terms of tissue distribution, expressed by the venom gland.

It is found in the secreted. It catalyses the reaction a 1,2-diacyl-sn-glycero-3-phosphocholine + H2O = a 1-acyl-sn-glycero-3-phosphocholine + a fatty acid + H(+). Snake venom phospholipase A2 (PLA2) that displays a potent enzymatic activity as measured by indirect hemolysis of red blood cells. Is neither lethal when injected into mice nor does it present anticoagulant activity. Displays a moderate inhibitory activity on the aggregation of platelets induced by low levels of ADP, thrombin and arachidonate. In contrast, strongly inhibits platelet aggregation induced by high doses of collagen. Shows myotoxic activity, increases the plasma creatine-kinase activity and induces edema and myonecrosis of mouse skeletal muscles. PLA2 catalyzes the calcium-dependent hydrolysis of the 2-acyl groups in 3-sn-phosphoglycerides. This Lachesis muta muta (Bushmaster) protein is Acidic phospholipase A2 1.